Consider the following 114-residue polypeptide: Large ribosomal subunit protein bL19 (114 aa).

Belongs to the bacterial ribosomal protein bL19 family.

Functionally, this protein is located at the 30S-50S ribosomal subunit interface and may play a role in the structure and function of the aminoacyl-tRNA binding site. This is Large ribosomal subunit protein bL19 from Bacillus cytotoxicus (strain DSM 22905 / CIP 110041 / 391-98 / NVH 391-98).